We begin with the raw amino-acid sequence, 397 residues long: LIM/homeobox protein Lhx9 (397 aa).

2 consecutive LIM zinc-binding domains span residues 69–130 (ALCA…RFSV) and 131–193 (QRCA…LLQG). Disordered stretches follow at residues 248–272 (ENEA…RMRT) and 330–364 (ENGG…TLTD). The segment at residues 267–326 (TKRMRTSFKHHQLRTMKSYFAINHNPDAKDLKQLAQKTGLTKRVLQVWFQNARAKFRRNL) is a DNA-binding region (homeobox).

As to quaternary structure, interacts with LDB1 and LDB2.

The protein resides in the nucleus. In terms of biological role, involved in gonadal development. This chain is LIM/homeobox protein Lhx9 (LHX9), found in Bos taurus (Bovine).